Here is a 369-residue protein sequence, read N- to C-terminus: 4-hydroxy-3-methylbut-2-en-1-yl diphosphate synthase (flavodoxin) (369 aa).

Residues cysteine 270, cysteine 273, cysteine 305, and glutamate 312 each coordinate [4Fe-4S] cluster.

The protein belongs to the IspG family. [4Fe-4S] cluster serves as cofactor.

The enzyme catalyses (2E)-4-hydroxy-3-methylbut-2-enyl diphosphate + oxidized [flavodoxin] + H2O + 2 H(+) = 2-C-methyl-D-erythritol 2,4-cyclic diphosphate + reduced [flavodoxin]. It participates in isoprenoid biosynthesis; isopentenyl diphosphate biosynthesis via DXP pathway; isopentenyl diphosphate from 1-deoxy-D-xylulose 5-phosphate: step 5/6. In terms of biological role, converts 2C-methyl-D-erythritol 2,4-cyclodiphosphate (ME-2,4cPP) into 1-hydroxy-2-methyl-2-(E)-butenyl 4-diphosphate. This chain is 4-hydroxy-3-methylbut-2-en-1-yl diphosphate synthase (flavodoxin), found in Pseudomonas putida (strain ATCC 700007 / DSM 6899 / JCM 31910 / BCRC 17059 / LMG 24140 / F1).